Here is a 271-residue protein sequence, read N- to C-terminus: tRNA pseudouridine synthase A (271 aa).

The active-site Nucleophile is the Asp51. Tyr109 contacts substrate.

This sequence belongs to the tRNA pseudouridine synthase TruA family. Homodimer.

The catalysed reaction is uridine(38/39/40) in tRNA = pseudouridine(38/39/40) in tRNA. In terms of biological role, formation of pseudouridine at positions 38, 39 and 40 in the anticodon stem and loop of transfer RNAs. In Methylococcus capsulatus (strain ATCC 33009 / NCIMB 11132 / Bath), this protein is tRNA pseudouridine synthase A.